A 105-amino-acid chain; its full sequence is Small ribosomal subunit protein uS10 (105 aa).

It belongs to the universal ribosomal protein uS10 family. Part of the 30S ribosomal subunit.

In terms of biological role, involved in the binding of tRNA to the ribosomes. The protein is Small ribosomal subunit protein uS10 of Aster yellows witches'-broom phytoplasma (strain AYWB).